The sequence spans 406 residues: Argininosuccinate synthase (406 aa).

Residues 12-20 (AYSGGLDTS) and Ala39 each bind ATP. The L-citrulline site is built by Tyr90 and Ser95. Gly120 serves as a coordination point for ATP. L-aspartate contacts are provided by Thr122, Asn126, and Asp127. Asn126 contacts L-citrulline. L-citrulline is bound by residues Arg130, Ser179, Ser188, Glu264, and Tyr276.

The protein belongs to the argininosuccinate synthase family. Type 1 subfamily. In terms of assembly, homotetramer.

It localises to the cytoplasm. It catalyses the reaction L-citrulline + L-aspartate + ATP = 2-(N(omega)-L-arginino)succinate + AMP + diphosphate + H(+). It functions in the pathway amino-acid biosynthesis; L-arginine biosynthesis; L-arginine from L-ornithine and carbamoyl phosphate: step 2/3. This is Argininosuccinate synthase from Geotalea uraniireducens (strain Rf4) (Geobacter uraniireducens).